The chain runs to 187 residues: Elongation factor P (187 aa).

Belongs to the elongation factor P family.

The protein localises to the cytoplasm. The protein operates within protein biosynthesis; polypeptide chain elongation. In terms of biological role, involved in peptide bond synthesis. Stimulates efficient translation and peptide-bond synthesis on native or reconstituted 70S ribosomes in vitro. Probably functions indirectly by altering the affinity of the ribosome for aminoacyl-tRNA, thus increasing their reactivity as acceptors for peptidyl transferase. The polypeptide is Elongation factor P (Mycolicibacterium vanbaalenii (strain DSM 7251 / JCM 13017 / BCRC 16820 / KCTC 9966 / NRRL B-24157 / PYR-1) (Mycobacterium vanbaalenii)).